The following is a 306-amino-acid chain: Homoserine O-acetyltransferase (306 aa).

The active-site Acyl-thioester intermediate is the cysteine 142. Substrate-binding residues include lysine 163 and serine 192. Histidine 235 serves as the catalytic Proton acceptor. Residue glutamate 237 is part of the active site. Residue arginine 249 coordinates substrate.

It belongs to the MetA family.

The protein localises to the cytoplasm. The catalysed reaction is L-homoserine + acetyl-CoA = O-acetyl-L-homoserine + CoA. Its pathway is amino-acid biosynthesis; L-methionine biosynthesis via de novo pathway; O-acetyl-L-homoserine from L-homoserine: step 1/1. Transfers an acetyl group from acetyl-CoA to L-homoserine, forming acetyl-L-homoserine. This chain is Homoserine O-acetyltransferase, found in Clostridium botulinum (strain Alaska E43 / Type E3).